Here is a 594-residue protein sequence, read N- to C-terminus: Developmental and secondary metabolism regulator veA (594 aa).

A Velvet domain is found at 24-220 (GRRLFYRIDV…AEQGTRVRIR (197 aa)). The short motif at 38 to 43 (EKCRAC) is the Nuclear localization signal element. Disordered stretches follow at residues 40–59 (CRACGSGPKSSTDRRPVDPP) and 210–558 (MAEQ…DVEE). The span at 217-229 (VRIRRDVRMRRRD) shows a compositional bias: basic residues. Positions 296-307 (APPPPNPPPPGF) are enriched in pro residues. Residues 327-351 (SHSQYQQPTSSSSSSEQVSSVPQSP) show a composition bias toward low complexity. Positions 352 to 362 (AYSSHAAQQHY) are enriched in polar residues. Positions 374-383 (PERRLSDHRS) are enriched in basic and acidic residues. Low complexity predominate over residues 384–403 (SQPNNHPQQSPHQHSYSHRS). Positions 405-416 (PQRERFMPDSRR) are enriched in basic and acidic residues. The segment at 457 to 506 (VADTQATPHLPPIRWPRPNMNLPSPPSEHQEALQPLQPAPLHYESQTHQQ) is PEST. Residues 523 to 538 (YSYGYSYSHNHSHGYG) are compositionally biased toward low complexity.

Belongs to the velvet family. VeA subfamily. In terms of assembly, component of the heterotrimeric velvet complex composed of LAEA, VEA and VELB; VEA acting as a bridging protein between LAEA and VELB.

The protein localises to the nucleus. Its subcellular location is the cytoplasm. In terms of biological role, component of the velvet transcription factor complex that controls sexual/asexual developmental ratio in response to light, promoting sexual development in the darkness while stimulating asexual sporulation under illumination. The velvet complex acts as a global regulator for secondary metabolite gene expression. Regulates of the response to reactive oxygen species (ROS) stress. The sequence is that of Developmental and secondary metabolism regulator veA from Pyricularia oryzae (strain 70-15 / ATCC MYA-4617 / FGSC 8958) (Rice blast fungus).